A 205-amino-acid polypeptide reads, in one-letter code: Small ribosomal subunit protein uS4 (205 aa).

The segment at 1–46 is disordered; the sequence is MSKRASSKYKIDRRMGENIWGRPKSPVNRREYGPGQHGQRRKGKLS. The S4 RNA-binding domain occupies 94–154; it reads SRLDAIVYRA…QKSKQLAIVL (61 aa).

The protein belongs to the universal ribosomal protein uS4 family. As to quaternary structure, part of the 30S ribosomal subunit. Contacts protein S5. The interaction surface between S4 and S5 is involved in control of translational fidelity.

In terms of biological role, one of the primary rRNA binding proteins, it binds directly to 16S rRNA where it nucleates assembly of the body of the 30S subunit. With S5 and S12 plays an important role in translational accuracy. This chain is Small ribosomal subunit protein uS4, found in Allorhizobium ampelinum (strain ATCC BAA-846 / DSM 112012 / S4) (Agrobacterium vitis (strain S4)).